The primary structure comprises 397 residues: Transcription factor xenB (397 aa).

The disordered stretch occupies residues threonine 220–serine 249. A compositionally biased stretch (polar residues) spans arginine 229 to glutamate 240.

Functionally, transcription factor; part of the gene cluster that mediates the biosynthesis of xenoacremones such as xenoacremone A, a compound that shows inhibitory activity toward the PI3K/AKT signaling pathway and which has the ability to induce apoptosis of A549 lung cancer cells. Acts as a positive regulator of the xenoacremones biosynthesis gene cluster. This is Transcription factor xenB from Xenoacremonium sinensis (Endophyte fungus).